Consider the following 214-residue polypeptide: Pyridoxine/pyridoxamine 5'-phosphate oxidase (214 aa).

Residues 7 to 10 (REEY) and Lys65 each bind substrate. Residues 60–65 (RTVLLK), 75–76 (FT), Arg81, Lys82, and Gln104 each bind FMN. Substrate contacts are provided by Tyr122, Arg126, and Ser130. FMN is bound by residues 139 to 140 (QS) and Trp184. Residue 190–192 (RLH) participates in substrate binding. Position 194 (Arg194) interacts with FMN.

The protein belongs to the pyridoxamine 5'-phosphate oxidase family. Homodimer. FMN is required as a cofactor.

The enzyme catalyses pyridoxamine 5'-phosphate + O2 + H2O = pyridoxal 5'-phosphate + H2O2 + NH4(+). It carries out the reaction pyridoxine 5'-phosphate + O2 = pyridoxal 5'-phosphate + H2O2. It participates in cofactor metabolism; pyridoxal 5'-phosphate salvage; pyridoxal 5'-phosphate from pyridoxamine 5'-phosphate: step 1/1. Its pathway is cofactor metabolism; pyridoxal 5'-phosphate salvage; pyridoxal 5'-phosphate from pyridoxine 5'-phosphate: step 1/1. Functionally, catalyzes the oxidation of either pyridoxine 5'-phosphate (PNP) or pyridoxamine 5'-phosphate (PMP) into pyridoxal 5'-phosphate (PLP). This chain is Pyridoxine/pyridoxamine 5'-phosphate oxidase, found in Crocosphaera subtropica (strain ATCC 51142 / BH68) (Cyanothece sp. (strain ATCC 51142)).